The primary structure comprises 171 residues: GTP-dependent dephospho-CoA kinase (171 aa).

4 residues coordinate GTP: Asp-49, Val-51, Asp-68, and Glu-122.

Belongs to the GTP-dependent DPCK family.

The enzyme catalyses 3'-dephospho-CoA + GTP = GDP + CoA + H(+). It participates in cofactor biosynthesis; coenzyme A biosynthesis. Its function is as follows. Catalyzes the GTP-dependent phosphorylation of the 3'-hydroxyl group of dephosphocoenzyme A to form coenzyme A (CoA). The polypeptide is GTP-dependent dephospho-CoA kinase (Hyperthermus butylicus (strain DSM 5456 / JCM 9403 / PLM1-5)).